A 377-amino-acid chain; its full sequence is Cytochrome c peroxidase, mitochondrial (377 aa).

The transit peptide at 1-32 directs the protein to the mitochondrion; the sequence is MSFRAPNLIRSTVGRRAGQTLNLRSQVIRRRF. Catalysis depends on His-138, which acts as the Proton acceptor. Heme b is bound at residue His-261. Trp-277 (tryptophan radical intermediate) is an active-site residue.

It belongs to the peroxidase family. Cytochrome c peroxidase subfamily. Forms a one-to-one complex with cytochrome c. Interacts with MID1 (via C-terminus); the interaction may contribute to cellular detoxification of radicals. The cofactor is heme b.

Its subcellular location is the mitochondrion matrix. The protein localises to the mitochondrion intermembrane space. The enzyme catalyses 2 Fe(II)-[cytochrome c] + H2O2 + 2 H(+) = 2 Fe(III)-[cytochrome c] + 2 H2O. Destroys radicals which are normally produced within the cells and which are toxic to biological systems. This Cryptococcus neoformans var. grubii serotype A (strain H99 / ATCC 208821 / CBS 10515 / FGSC 9487) (Filobasidiella neoformans var. grubii) protein is Cytochrome c peroxidase, mitochondrial (CCP1).